Here is a 121-residue protein sequence, read N- to C-terminus: Basic phospholipase A2 homolog textilotoxin B chain (121 aa).

Intrachain disulfides connect Cys11/Cys72, Cys27/Cys120, Cys29/Cys45, Cys44/Cys101, Cys51/Cys94, Cys61/Cys87, and Cys80/Cys92.

The protein belongs to the phospholipase A2 family. Group I subfamily. N49 sub-subfamily. Heterohexamer. 2 forms exist: 2 A or 2 B chains, 2 C chains and 2 covalently-linked D chains, and 1 A or 1 B, 1 C, 2 covalently-linked D chains and 2 differentially glycosylated covalently-linked D chains. Textilotoxin was originally described as pentameric. As to expression, expressed by the venom gland.

The protein resides in the secreted. In terms of biological role, snake venom oligomeric phospholipase A2 that has potent presynaptic neurotoxicity. Chain B is not itself neurotoxic, but it is essential for the neurotoxicity of textilotoxin. Subunit B possesses a very low phospholipase activity. This chain is Basic phospholipase A2 homolog textilotoxin B chain, found in Pseudonaja textilis (Eastern brown snake).